A 259-amino-acid chain; its full sequence is Phospholipase YtpA (259 aa).

The active-site Nucleophile is the serine 88. Catalysis depends on charge relay system residues aspartate 206 and histidine 236.

It belongs to the AB hydrolase superfamily.

It participates in antibiotic biosynthesis; bacilysocin biosynthesis. Its function is as follows. Phospholipase involved in the biosynthesis of the antibiotic bacilysocin. It probably catalyzes the hydrolysis of the 2-sn-acyl moiety of phosphatidylglycerol to produce bacilysocin (lysophosphatidylglycerol). Is also able to catalyze the hydrolysis reaction of one acyl bond in phosphatidylcholine in vitro (actual cleavage point is unknown), resulting in lysophosphatidylcholine. The chain is Phospholipase YtpA (ytpA) from Bacillus subtilis (strain 168).